The primary structure comprises 98 residues: MLCAVYKSIRKSQTYLFIAKRDDFSSVPEPLLAQFGPPQLVSLLNITLQTKFAMAEAEKVLSAVKNNGYYLQLPPPPVNHLQEHKDWKKKRQENKNEI.

The YcgL domain occupies 1–85 (MLCAVYKSIR…PPVNHLQEHK (85 aa)). Positions 75–98 (PPPVNHLQEHKDWKKKRQENKNEI) are disordered.

The chain is YcgL domain-containing protein Ping_1076 from Psychromonas ingrahamii (strain DSM 17664 / CCUG 51855 / 37).